The following is a 157-amino-acid chain: Ribosomal RNA large subunit methyltransferase H (157 aa).

Residues leucine 73, glycine 105, and leucine 124–phenylalanine 129 each bind S-adenosyl-L-methionine.

Belongs to the RNA methyltransferase RlmH family. Homodimer.

The protein localises to the cytoplasm. The catalysed reaction is pseudouridine(1915) in 23S rRNA + S-adenosyl-L-methionine = N(3)-methylpseudouridine(1915) in 23S rRNA + S-adenosyl-L-homocysteine + H(+). Specifically methylates the pseudouridine at position 1915 (m3Psi1915) in 23S rRNA. This is Ribosomal RNA large subunit methyltransferase H from Porphyromonas gingivalis (strain ATCC 33277 / DSM 20709 / CIP 103683 / JCM 12257 / NCTC 11834 / 2561).